The sequence spans 300 residues: MTKHLPTISDISPLLKAEILAEALPYIRSYHGKTIVIKYGGNAMVEERLKESFARDVILLKLVGMNPVVVHGGGPQIDEALKKIGKTGTFIQGMRVTDEETMEVVEWVLGGEVQQDIVMLINHFGGQAVGLTGKDGGLIRAKKMLVANEKQPGGTIDLGFVGEIEAINPAVVKALQDDAFIPVISPIGFSEEGQAYNINADLVAGKMAEILHAEKLVMMTNIPGVMDKNGTLLTDLTAREIDGLFADGTISGGMLPKISSALDAAKSGVNSVHIIDGRIEHSLLLEILTEQAFGTMIRSR.

Residues Gly-73 to Gly-74, Arg-95, and Asn-197 each bind substrate.

This sequence belongs to the acetylglutamate kinase family. ArgB subfamily.

Its subcellular location is the cytoplasm. The catalysed reaction is N-acetyl-L-glutamate + ATP = N-acetyl-L-glutamyl 5-phosphate + ADP. Its pathway is amino-acid biosynthesis; L-arginine biosynthesis; N(2)-acetyl-L-ornithine from L-glutamate: step 2/4. Functionally, catalyzes the ATP-dependent phosphorylation of N-acetyl-L-glutamate. This is Acetylglutamate kinase from Polynucleobacter necessarius subsp. necessarius (strain STIR1).